We begin with the raw amino-acid sequence, 210 residues long: Large ribosomal subunit protein uL3 (210 aa).

The tract at residues 133-152 is disordered; that stretch reads ATHGNSLSHRVHGSTGQNQT. An N5-methylglutamine modification is found at glutamine 151.

Belongs to the universal ribosomal protein uL3 family. In terms of assembly, part of the 50S ribosomal subunit. Forms a cluster with proteins L14 and L19. Methylated by PrmB.

In terms of biological role, one of the primary rRNA binding proteins, it binds directly near the 3'-end of the 23S rRNA, where it nucleates assembly of the 50S subunit. The polypeptide is Large ribosomal subunit protein uL3 (Francisella tularensis subsp. holarctica (strain FTNF002-00 / FTA)).